Here is a 239-residue protein sequence, read N- to C-terminus: Ribonuclease PH (239 aa).

Phosphate-binding positions include arginine 86 and glycine 124–arginine 126.

Belongs to the RNase PH family. As to quaternary structure, homohexameric ring arranged as a trimer of dimers.

The catalysed reaction is tRNA(n+1) + phosphate = tRNA(n) + a ribonucleoside 5'-diphosphate. Phosphorolytic 3'-5' exoribonuclease that plays an important role in tRNA 3'-end maturation. Removes nucleotide residues following the 3'-CCA terminus of tRNAs; can also add nucleotides to the ends of RNA molecules by using nucleoside diphosphates as substrates, but this may not be physiologically important. Probably plays a role in initiation of 16S rRNA degradation (leading to ribosome degradation) during starvation. This Allorhizobium ampelinum (strain ATCC BAA-846 / DSM 112012 / S4) (Agrobacterium vitis (strain S4)) protein is Ribonuclease PH.